A 325-amino-acid polypeptide reads, in one-letter code: MTKRVRLSDSFNPVYPYEDESTSQHPFINPGFISPNGFTQSPDGVLTLKCLTPLTTTGGSLQLKVGGGLTVDDTDGTLQENIGTTTPLVKTGHSIGLSLGAGLGTDENKLCTKLGKGLTFNSNNICIDDNINTLWTGINPTEANCQMMDSSESNDCKLILTLVKTGALVTAFVYVIGVSNNFNMLTTYRNINFTAELFFDSAGNLLTSLSSLKTPLNHKSGQNMATGAITNAKSFMPSTTAYPFNNNSREKENYIYGTCHYTASDHTAFPIDISVMLNQRAIRADTSYCIRITWSWNTGDAPEGQTSATTLVTSPFTFYYIREDD.

Belongs to the adenoviridae fiber family. In terms of assembly, homotrimer. Interacts with host receptor CD46. Interacts (via N-terminal tail region) with pentons.

Its subcellular location is the virion. It is found in the host nucleus. Its function is as follows. Forms spikes that protrude from each vertex of the icosahedral capsid. Interacts with host receptor CD46 to provide virion initial attachment to target cell. Fiber proteins are shed during virus entry, when virus is still at the cell surface. In Human adenovirus B serotype 11 (strain BC34) (HAdV-11), this protein is Fiber protein.